A 527-amino-acid polypeptide reads, in one-letter code: Probable malate:quinone oxidoreductase (527 aa).

It belongs to the MQO family. FAD serves as cofactor.

It carries out the reaction (S)-malate + a quinone = a quinol + oxaloacetate. It participates in carbohydrate metabolism; tricarboxylic acid cycle; oxaloacetate from (S)-malate (quinone route): step 1/1. This is Probable malate:quinone oxidoreductase from Pectobacterium atrosepticum (strain SCRI 1043 / ATCC BAA-672) (Erwinia carotovora subsp. atroseptica).